Consider the following 329-residue polypeptide: Phosphate acyltransferase (329 aa).

The protein belongs to the PlsX family. Homodimer. Probably interacts with PlsY.

It localises to the cytoplasm. The catalysed reaction is a fatty acyl-[ACP] + phosphate = an acyl phosphate + holo-[ACP]. Its pathway is lipid metabolism; phospholipid metabolism. Its function is as follows. Catalyzes the reversible formation of acyl-phosphate (acyl-PO(4)) from acyl-[acyl-carrier-protein] (acyl-ACP). This enzyme utilizes acyl-ACP as fatty acyl donor, but not acyl-CoA. The chain is Phosphate acyltransferase from Geobacillus sp. (strain WCH70).